We begin with the raw amino-acid sequence, 298 residues long: uncharacterized protein (298 aa).

Positions 194–295 constitute an HTH araC/xylS-type domain; it reads KRLNTALIAI…QLSPSQYRKS (102 aa). DNA-binding regions (H-T-H motif) lie at residues 214-235 and 262-285; these read EQLA…QQHI and VLAI…KNYY.

This is an uncharacterized protein from Haemophilus influenzae (strain ATCC 51907 / DSM 11121 / KW20 / Rd).